The primary structure comprises 815 residues: DNA topoisomerase 1 (815 aa).

A Toprim domain is found at 3 to 119 (KHLLIVESPA…QRIVFTEITP (117 aa)). 2 residues coordinate Mg(2+): Glu9 and Asp82. The region spanning 133–573 (ASDLVDAQQA…KFWVPFKELV (441 aa)) is the Topo IA-type catalytic domain. An interaction with DNA region spans residues 167–172 (SAGRVQ). Tyr308 serves as the catalytic O-(5'-phospho-DNA)-tyrosine intermediate. The tract at residues 760-815 (GKPARKNFSTKKTATKNETRKQTTKKRTTDAKATKKVSDKPVKKQIKKRIAPNITE) is disordered. The segment covering 774–801 (TKNETRKQTTKKRTTDAKATKKVSDKPV) has biased composition (basic and acidic residues).

The protein belongs to the type IA topoisomerase family. In terms of assembly, monomer. Requires Mg(2+) as cofactor.

The enzyme catalyses ATP-independent breakage of single-stranded DNA, followed by passage and rejoining.. Functionally, releases the supercoiling and torsional tension of DNA, which is introduced during the DNA replication and transcription, by transiently cleaving and rejoining one strand of the DNA duplex. Introduces a single-strand break via transesterification at a target site in duplex DNA. The scissile phosphodiester is attacked by the catalytic tyrosine of the enzyme, resulting in the formation of a DNA-(5'-phosphotyrosyl)-enzyme intermediate and the expulsion of a 3'-OH DNA strand. The free DNA strand then undergoes passage around the unbroken strand, thus removing DNA supercoils. Finally, in the religation step, the DNA 3'-OH attacks the covalent intermediate to expel the active-site tyrosine and restore the DNA phosphodiester backbone. The sequence is that of DNA topoisomerase 1 from Xylella fastidiosa (strain 9a5c).